Here is an 89-residue protein sequence, read N- to C-terminus: MAVSKERKNEIIKEYATHEGDTGSVEVQVAVLTEDINNLTQHMREHSHDHHSYVGLLKKIGHRRNLLRYLQENDLERYRALIARLGLRR.

The protein belongs to the universal ribosomal protein uS15 family. In terms of assembly, part of the 30S ribosomal subunit. Forms a bridge to the 50S subunit in the 70S ribosome, contacting the 23S rRNA.

Functionally, one of the primary rRNA binding proteins, it binds directly to 16S rRNA where it helps nucleate assembly of the platform of the 30S subunit by binding and bridging several RNA helices of the 16S rRNA. In terms of biological role, forms an intersubunit bridge (bridge B4) with the 23S rRNA of the 50S subunit in the ribosome. This is Small ribosomal subunit protein uS15 from Lactobacillus delbrueckii subsp. bulgaricus (strain ATCC 11842 / DSM 20081 / BCRC 10696 / JCM 1002 / NBRC 13953 / NCIMB 11778 / NCTC 12712 / WDCM 00102 / Lb 14).